The chain runs to 346 residues: Protease inhibitor Egf1.5b (346 aa).

The N-terminal stretch at 1-28 is a signal peptide; that stretch reads MYIDTGIMSNNIFLFAFFALVGLTRIEA. A TIL domain is found at 52-104; the sequence is CRENEHYNSTRIECEDECNDRNNKLCYRFQQFCWCNEGYIRNSSHICVKLEDC.

The protein belongs to the polydnaviridae EGF-like motif protein family. In terms of assembly, interacts with host PAP1, PAP3 and SPH2.

Counteracts the host humoral immune response by inhibiting the processing and the amidolytic activity of host PAP1 and PAP3. Thereby, melanization of host hemolymph, normally producing several reactive intermediates toxic for viruses, is deregulated and proper immune response cannot occur. The chain is Protease inhibitor Egf1.5b (O5) from Microplitis demolitor (Parasitoid wasp).